A 561-amino-acid chain; its full sequence is Type 2 DNA topoisomerase 6 subunit B (561 aa).

ATP-binding positions include asparagine 46, aspartate 78, 99-100 (TK), 109-116 (GQQGIGIS), and lysine 471.

Belongs to the TOP6B family. In terms of assembly, homodimer. Heterotetramer of two Top6A and two Top6B chains.

It carries out the reaction ATP-dependent breakage, passage and rejoining of double-stranded DNA.. In terms of biological role, relaxes both positive and negative superturns and exhibits a strong decatenase activity. This is Type 2 DNA topoisomerase 6 subunit B from Thermococcus gammatolerans (strain DSM 15229 / JCM 11827 / EJ3).